A 301-amino-acid chain; its full sequence is Immediate early response gene 5-like protein (301 aa).

This sequence belongs to the IER family.

The protein is Immediate early response gene 5-like protein (ier5l) of Danio rerio (Zebrafish).